Consider the following 297-residue polypeptide: Glucose-6-phosphate 1-epimerase (297 aa).

Arginine 57, glutamine 81, and arginine 86 together coordinate substrate. Serine 88 carries the phosphoserine modification. Histidine 159 is an active-site residue. A substrate-binding site is contributed by aspartate 203. The active site involves glutamate 264.

This sequence belongs to the glucose-6-phosphate 1-epimerase family.

It catalyses the reaction alpha-D-glucose 6-phosphate = beta-D-glucose 6-phosphate. Catalyzes the interconversion between the alpha and beta anomers from at least three hexose 6-phosphate sugars (Glc6P, Gal6P, and Man6P). The sequence is that of Glucose-6-phosphate 1-epimerase from Saccharomyces cerevisiae (strain ATCC 204508 / S288c) (Baker's yeast).